Here is a 175-residue protein sequence, read N- to C-terminus: Ribosome maturation factor RimM (175 aa).

A PRC barrel domain is found at 96–172; sequence PDTYYDHQLE…LIEIDPPDGL (77 aa).

The protein belongs to the RimM family. As to quaternary structure, binds ribosomal protein uS19.

Its subcellular location is the cytoplasm. Its function is as follows. An accessory protein needed during the final step in the assembly of 30S ribosomal subunit, possibly for assembly of the head region. Essential for efficient processing of 16S rRNA. May be needed both before and after RbfA during the maturation of 16S rRNA. It has affinity for free ribosomal 30S subunits but not for 70S ribosomes. This Mycolicibacterium paratuberculosis (strain ATCC BAA-968 / K-10) (Mycobacterium paratuberculosis) protein is Ribosome maturation factor RimM.